Here is a 217-residue protein sequence, read N- to C-terminus: Thiamine-phosphate synthase (217 aa).

4-amino-2-methyl-5-(diphosphooxymethyl)pyrimidine contacts are provided by residues 42 to 46 (QFRDK) and Asp77. Residues Asp78 and Asp97 each coordinate Mg(2+). Ser117 provides a ligand contact to 4-amino-2-methyl-5-(diphosphooxymethyl)pyrimidine. 144–146 (TIS) lines the 2-[(2R,5Z)-2-carboxy-4-methylthiazol-5(2H)-ylidene]ethyl phosphate pocket. 4-amino-2-methyl-5-(diphosphooxymethyl)pyrimidine is bound at residue Lys147. Residues Gly175 and 195–196 (IT) each bind 2-[(2R,5Z)-2-carboxy-4-methylthiazol-5(2H)-ylidene]ethyl phosphate.

Belongs to the thiamine-phosphate synthase family. The cofactor is Mg(2+).

The enzyme catalyses 2-[(2R,5Z)-2-carboxy-4-methylthiazol-5(2H)-ylidene]ethyl phosphate + 4-amino-2-methyl-5-(diphosphooxymethyl)pyrimidine + 2 H(+) = thiamine phosphate + CO2 + diphosphate. The catalysed reaction is 2-(2-carboxy-4-methylthiazol-5-yl)ethyl phosphate + 4-amino-2-methyl-5-(diphosphooxymethyl)pyrimidine + 2 H(+) = thiamine phosphate + CO2 + diphosphate. It catalyses the reaction 4-methyl-5-(2-phosphooxyethyl)-thiazole + 4-amino-2-methyl-5-(diphosphooxymethyl)pyrimidine + H(+) = thiamine phosphate + diphosphate. The protein operates within cofactor biosynthesis; thiamine diphosphate biosynthesis; thiamine phosphate from 4-amino-2-methyl-5-diphosphomethylpyrimidine and 4-methyl-5-(2-phosphoethyl)-thiazole: step 1/1. Functionally, condenses 4-methyl-5-(beta-hydroxyethyl)thiazole monophosphate (THZ-P) and 2-methyl-4-amino-5-hydroxymethyl pyrimidine pyrophosphate (HMP-PP) to form thiamine monophosphate (TMP). The polypeptide is Thiamine-phosphate synthase (Levilactobacillus brevis (strain ATCC 367 / BCRC 12310 / CIP 105137 / JCM 1170 / LMG 11437 / NCIMB 947 / NCTC 947) (Lactobacillus brevis)).